The following is a 25-amino-acid chain: Grammistin Pp 3 (25 aa).

Belongs to the grammistin family. Group 3 subfamily. In terms of assembly, exists as aggregates of 3-4 molecules. Expressed by the skin glands.

Its subcellular location is the secreted. In terms of biological role, thanks to its abundant amphiphilic alpha-helices, it may integrate into membrane phospholipids, leading to lysis of the membrane. Has hemolytic activity. Has antibacterial activity with a broad spectrum against various species of bacteria including both Gram-positive and Gram-negative groups. Also has ichthyotoxic activity. The sequence is that of Grammistin Pp 3 from Pogonoperca punctata (Clown grouper).